The sequence spans 415 residues: Gamma-glutamyl phosphate reductase (415 aa).

Belongs to the gamma-glutamyl phosphate reductase family.

Its subcellular location is the cytoplasm. It catalyses the reaction L-glutamate 5-semialdehyde + phosphate + NADP(+) = L-glutamyl 5-phosphate + NADPH + H(+). The protein operates within amino-acid biosynthesis; L-proline biosynthesis; L-glutamate 5-semialdehyde from L-glutamate: step 2/2. Catalyzes the NADPH-dependent reduction of L-glutamate 5-phosphate into L-glutamate 5-semialdehyde and phosphate. The product spontaneously undergoes cyclization to form 1-pyrroline-5-carboxylate. In Clostridium perfringens (strain ATCC 13124 / DSM 756 / JCM 1290 / NCIMB 6125 / NCTC 8237 / Type A), this protein is Gamma-glutamyl phosphate reductase.